Here is a 624-residue protein sequence, read N- to C-terminus: Probable potassium transport system protein Kup (624 aa).

12 helical membrane-spanning segments follow: residues 13–33 (LALG…LYTM), 52–72 (ILSL…VLVI), 102–122 (WIIM…SLIT), 139–159 (PALH…LFAI), 170–190 (LFGP…AIGI), 208–228 (FFMT…LAIT), 249–269 (WFGF…ALLL), 291–311 (MVAL…SGAF), 339–359 (IYIP…VLGF), 368–388 (AYGI…ALLM), 399–419 (TLVA…ANAV), and 421–441 (IPEG…ILVT).

It belongs to the HAK/KUP transporter (TC 2.A.72) family.

The protein localises to the cell inner membrane. It carries out the reaction K(+)(in) + H(+)(in) = K(+)(out) + H(+)(out). Its function is as follows. Transport of potassium into the cell. Likely operates as a K(+):H(+) symporter. The polypeptide is Probable potassium transport system protein Kup (Thiobacillus denitrificans (strain ATCC 25259 / T1)).